A 399-amino-acid chain; its full sequence is Tyrosine--tRNA ligase (399 aa).

The 'HIGH' region motif lies at 42–51 (PTAPDLHLGH). The short motif at 226–230 (KMSKS) is the 'KMSKS' region element. K229 contributes to the ATP binding site. The S4 RNA-binding domain occupies 336 to 396 (MPIAAVLNKA…GKKAFARITL (61 aa)).

It belongs to the class-I aminoacyl-tRNA synthetase family. TyrS type 2 subfamily. Homodimer.

The protein localises to the cytoplasm. The enzyme catalyses tRNA(Tyr) + L-tyrosine + ATP = L-tyrosyl-tRNA(Tyr) + AMP + diphosphate + H(+). Its function is as follows. Catalyzes the attachment of tyrosine to tRNA(Tyr) in a two-step reaction: tyrosine is first activated by ATP to form Tyr-AMP and then transferred to the acceptor end of tRNA(Tyr). The chain is Tyrosine--tRNA ligase from Pseudomonas fluorescens (strain Pf0-1).